The sequence spans 366 residues: D-alanine--D-alanine ligase (366 aa).

An ATP-grasp domain is found at 144–347; that stretch reads KRLLKDAGLK…YRELIENLIE (204 aa). Position 174 to 229 (174 to 229) interacts with ATP; the sequence is KEELGLPMFIKPANQGSSVGVHKVENEEQFYSAIKDAFQFDHKLLVEEAIVGREIE. The Mg(2+) site is built by Asp301, Glu314, and Asn316.

Belongs to the D-alanine--D-alanine ligase family. Mg(2+) is required as a cofactor. It depends on Mn(2+) as a cofactor.

It is found in the cytoplasm. It carries out the reaction 2 D-alanine + ATP = D-alanyl-D-alanine + ADP + phosphate + H(+). It functions in the pathway cell wall biogenesis; peptidoglycan biosynthesis. Its function is as follows. Cell wall formation. This is D-alanine--D-alanine ligase from Oceanobacillus iheyensis (strain DSM 14371 / CIP 107618 / JCM 11309 / KCTC 3954 / HTE831).